Reading from the N-terminus, the 755-residue chain is PWWP domain-containing protein 2A (755 aa).

Positions 1 to 15 (MAAVAAEAAATAASP) are enriched in low complexity. Residues 1-153 (MAAVAAEAAA…VPPAGGDSTV (153 aa)) are disordered. Pro residues predominate over residues 64 to 76 (DEPPLPPPPPPPG). Phosphoserine is present on residues serine 81, serine 102, serine 116, and serine 119. Residues 112-126 (ELPPSPASPPEQPPA) are compositionally biased toward pro residues. Residues 148-373 (GGDSTVSQLI…KLKTDHKVDG (226 aa)) form an interaction with HDAC1 and MTA1 region. Lysine 208 participates in a covalent cross-link: Glycyl lysine isopeptide (Lys-Gly) (interchain with G-Cter in SUMO2). 4 disordered regions span residues 282–301 (YNQS…KRKM), 334–384 (KEIR…KRNA), 400–562 (KVSA…GSKN), and 578–626 (SSAS…SKEE). The span at 292-301 (RKIKRPKRKM) shows a compositional bias: basic residues. Basic and acidic residues-rich tracts occupy residues 346 to 356 (SKYEDKKRRNE) and 368 to 381 (DHKV…ESQK). A compositionally biased stretch (polar residues) spans 403-421 (AQANTSKAQLSTKKVLQSK). The segment covering 422–444 (NMDHAKAREVLKIAKEKAQKKQN) has biased composition (basic and acidic residues). The interval 423 to 574 (MDHAKAREVL…SVYMTLNQKK (152 aa)) is interaction with the H2A.Z/H2AZ1. Polar residues predominate over residues 508-527 (SRCTSTRSAGEAPSENQSPS). Residues 593–603 (SSNSECSSSES) show a composition bias toward low complexity. The 61-residue stretch at 655–715 (VGDIVWAKIY…LSQLSPFLEN (61 aa)) folds into the PWWP domain.

In terms of assembly, component of a MTA1-specific subcomplex of the NuRD complex (M1HR), composed of PWWP2A, MTA1/2, HDAC1/2, and RBBP4/7 but does not contain CHD4 and MBD3. Interacts with MTA1; the interaction mediates the association of PWWP2A with the M1HR complex. Interacts with H2A.Z/H2AZ1. Interacts (via PWWP domain) with histone H3 trimethylated at 'Lys-36' (H3K36me3). Does not interact with CHD4 and MBD3. As to quaternary structure, interacts with MTA1 and with HDAC1 in a MTA1-dependent manner. Does not interact with CHD4 and MBD3.

It localises to the nucleus. Functionally, chromatin-binding protein that acts as an adapter between distinct nucleosome components (H3K36me3 or H2A.Z) and chromatin-modifying complexes, contributing to the regulation of the levels of histone acetylation at actively transcribed genes. Competes with CHD4 and MBD3 for interaction with MTA1 to form a NuRD subcomplex, preventing the formation of full NuRD complex (containing CHD4 and MBD3), leading to recruitment of HDACs to gene promoters resulting in turn in the deacetylation of nearby H3K27 and H2A.Z. Plays a role in facilitating transcriptional elongation and repression of spurious transcription initiation through regulation of histone acetylation. Essential for proper mitosis progression. The sequence is that of PWWP domain-containing protein 2A (PWWP2A) from Homo sapiens (Human).